We begin with the raw amino-acid sequence, 282 residues long: MMSVTNNLKVTAGDGASKVSFCNTERFSLIAGPCQMESRDHAFMIAGVLKELCDSLGIGLVYKSSFDKANRTSLSGKRGIGLDSAMEIFADLKKEFGFPVLSDIHTEEQCAIVSEVVDVLQIPAFLSRQTDLLVAAAKTGRVINVKKGQFLAPWDMKNVLAKLNESGNPNVLLCERGASFGYNTLVSDMRSLPIMASLGAPVIFDATHSVQQPGGQGGSTGGQREFVETLARAAVAVGVAGLFIETHEDPDNAPSDGPNMVHLKDMPKLLEKLLAFDAITKA.

It belongs to the KdsA family.

It localises to the cytoplasm. It carries out the reaction D-arabinose 5-phosphate + phosphoenolpyruvate + H2O = 3-deoxy-alpha-D-manno-2-octulosonate-8-phosphate + phosphate. It participates in carbohydrate biosynthesis; 3-deoxy-D-manno-octulosonate biosynthesis; 3-deoxy-D-manno-octulosonate from D-ribulose 5-phosphate: step 2/3. It functions in the pathway bacterial outer membrane biogenesis; lipopolysaccharide biosynthesis. The protein is 2-dehydro-3-deoxyphosphooctonate aldolase of Agrobacterium fabrum (strain C58 / ATCC 33970) (Agrobacterium tumefaciens (strain C58)).